A 315-amino-acid polypeptide reads, in one-letter code: Ribosomal RNA small subunit methyltransferase H (315 aa).

S-adenosyl-L-methionine-binding positions include 37 to 39, Asp-57, Asp-105, and Gln-112; that span reads GGH.

Belongs to the methyltransferase superfamily. RsmH family.

The protein localises to the cytoplasm. It carries out the reaction cytidine(1402) in 16S rRNA + S-adenosyl-L-methionine = N(4)-methylcytidine(1402) in 16S rRNA + S-adenosyl-L-homocysteine + H(+). In terms of biological role, specifically methylates the N4 position of cytidine in position 1402 (C1402) of 16S rRNA. This Nitrosococcus oceani (strain ATCC 19707 / BCRC 17464 / JCM 30415 / NCIMB 11848 / C-107) protein is Ribosomal RNA small subunit methyltransferase H.